Reading from the N-terminus, the 354-residue chain is UDP-N-acetylglucosamine--N-acetylmuramyl-(pentapeptide) pyrophosphoryl-undecaprenol N-acetylglucosamine transferase (354 aa).

UDP-N-acetyl-alpha-D-glucosamine is bound by residues 11–13, Arg164, Ser194, and Gln289; that span reads TAG.

Belongs to the glycosyltransferase 28 family. MurG subfamily.

The protein localises to the cell membrane. The catalysed reaction is di-trans,octa-cis-undecaprenyl diphospho-N-acetyl-alpha-D-muramoyl-L-alanyl-D-glutamyl-meso-2,6-diaminopimeloyl-D-alanyl-D-alanine + UDP-N-acetyl-alpha-D-glucosamine = di-trans,octa-cis-undecaprenyl diphospho-[N-acetyl-alpha-D-glucosaminyl-(1-&gt;4)]-N-acetyl-alpha-D-muramoyl-L-alanyl-D-glutamyl-meso-2,6-diaminopimeloyl-D-alanyl-D-alanine + UDP + H(+). It participates in cell wall biogenesis; peptidoglycan biosynthesis. Its function is as follows. Cell wall formation. Catalyzes the transfer of a GlcNAc subunit on undecaprenyl-pyrophosphoryl-MurNAc-pentapeptide (lipid intermediate I) to form undecaprenyl-pyrophosphoryl-MurNAc-(pentapeptide)GlcNAc (lipid intermediate II). The sequence is that of UDP-N-acetylglucosamine--N-acetylmuramyl-(pentapeptide) pyrophosphoryl-undecaprenol N-acetylglucosamine transferase from Clostridium botulinum (strain ATCC 19397 / Type A).